A 144-amino-acid chain; its full sequence is Large ribosomal subunit protein uL15 (144 aa).

The disordered stretch occupies residues 1–60; sequence MRLNSLRPAAGSRPDANRVGRGAGTGNGKTAGRGHKGQHSRSGGFTKVGFEGGQMPLQRR. Over residues 21–31 the composition is skewed to gly residues; sequence RGAGTGNGKTA.

The protein belongs to the universal ribosomal protein uL15 family. Part of the 50S ribosomal subunit.

In terms of biological role, binds to the 23S rRNA. This Alkalilimnicola ehrlichii (strain ATCC BAA-1101 / DSM 17681 / MLHE-1) protein is Large ribosomal subunit protein uL15.